We begin with the raw amino-acid sequence, 345 residues long: MTDKTSLSYKDAGVDIDAGNALVGRIKGVVKKTRRPEVMGGLGGFGALCALPQKYREPVLVSGTDGVGTKLRLAMDLKRHDTIGIDLVAMCVNDLVVQGAEPLFFLDYYATGKLDVDTASAVISGIAEGCLQSGCSLVGGETAEMPGMYHGEDYDVAGFCVGVVEKSEIIDGSKVSDGDVLIALGSSGPHSNGYSLVRKILEVSGCDPQTTELDGKPLADHLLAPTRIYVKSVLELIEKVDVHAIAHLTGGGFWENIPRVLPDNTQAVIDESSWQWPEVFNWLQTAGNVERHEMYRTFNCGVGMIIALPAPEVDKALALLNSNGENAWKIGIIKASDSEQRVVIE.

The protein belongs to the AIR synthase family.

The protein localises to the cytoplasm. The enzyme catalyses 2-formamido-N(1)-(5-O-phospho-beta-D-ribosyl)acetamidine + ATP = 5-amino-1-(5-phospho-beta-D-ribosyl)imidazole + ADP + phosphate + H(+). It functions in the pathway purine metabolism; IMP biosynthesis via de novo pathway; 5-amino-1-(5-phospho-D-ribosyl)imidazole from N(2)-formyl-N(1)-(5-phospho-D-ribosyl)glycinamide: step 2/2. In Escherichia coli O139:H28 (strain E24377A / ETEC), this protein is Phosphoribosylformylglycinamidine cyclo-ligase.